The primary structure comprises 163 residues: Nucleotide-binding protein LBJ_2391 (163 aa).

It belongs to the YajQ family.

Its function is as follows. Nucleotide-binding protein. This is Nucleotide-binding protein LBJ_2391 from Leptospira borgpetersenii serovar Hardjo-bovis (strain JB197).